Here is a 322-residue protein sequence, read N- to C-terminus: NAD(P)H-dependent D-xylose reductase (322 aa).

The active-site Proton donor is Tyr-52. His-114 contributes to the substrate binding site. NAD(+) is bound by residues 169–170 (SN), 218–227 (SSFGPQSFVE), and 274–284 (KSNLPERLVQN).

The protein belongs to the aldo/keto reductase family. As to quaternary structure, homodimer.

The catalysed reaction is xylitol + NAD(+) = D-xylose + NADH + H(+). It catalyses the reaction xylitol + NADP(+) = D-xylose + NADPH + H(+). Its pathway is carbohydrate metabolism; D-xylose degradation. Functionally, reduces D-xylose into xylitol. Has a preference for NADPH, but can also utilize NADH as cosubstrate. This Candida tenuis (Yeast) protein is NAD(P)H-dependent D-xylose reductase (XYL1).